The primary structure comprises 369 residues: Aminomethyltransferase (369 aa).

It belongs to the GcvT family. In terms of assembly, the glycine cleavage system is composed of four proteins: P, T, L and H.

The enzyme catalyses N(6)-[(R)-S(8)-aminomethyldihydrolipoyl]-L-lysyl-[protein] + (6S)-5,6,7,8-tetrahydrofolate = N(6)-[(R)-dihydrolipoyl]-L-lysyl-[protein] + (6R)-5,10-methylene-5,6,7,8-tetrahydrofolate + NH4(+). In terms of biological role, the glycine cleavage system catalyzes the degradation of glycine. This is Aminomethyltransferase from Xanthomonas euvesicatoria pv. vesicatoria (strain 85-10) (Xanthomonas campestris pv. vesicatoria).